A 410-amino-acid chain; its full sequence is LL-diaminopimelate aminotransferase (410 aa).

2 residues coordinate substrate: Tyr-15 and Gly-42. Pyridoxal 5'-phosphate contacts are provided by residues Tyr-72, Ser-108–Lys-109, Tyr-132, Asn-187, Tyr-218, and Ser-246–Ser-248. 3 residues coordinate substrate: Lys-109, Tyr-132, and Asn-187. At Lys-249 the chain carries N6-(pyridoxal phosphate)lysine. Pyridoxal 5'-phosphate is bound by residues Arg-257 and Asn-292. Positions 292 and 388 each coordinate substrate.

The protein belongs to the class-I pyridoxal-phosphate-dependent aminotransferase family. LL-diaminopimelate aminotransferase subfamily. Homodimer. It depends on pyridoxal 5'-phosphate as a cofactor.

It carries out the reaction (2S,6S)-2,6-diaminopimelate + 2-oxoglutarate = (S)-2,3,4,5-tetrahydrodipicolinate + L-glutamate + H2O + H(+). It participates in amino-acid biosynthesis; L-lysine biosynthesis via DAP pathway; LL-2,6-diaminopimelate from (S)-tetrahydrodipicolinate (aminotransferase route): step 1/1. In terms of biological role, involved in the synthesis of meso-diaminopimelate (m-DAP or DL-DAP), required for both lysine and peptidoglycan biosynthesis. Catalyzes the direct conversion of tetrahydrodipicolinate to LL-diaminopimelate. The protein is LL-diaminopimelate aminotransferase of Thermosynechococcus vestitus (strain NIES-2133 / IAM M-273 / BP-1).